A 229-amino-acid chain; its full sequence is Large ribosomal subunit protein uL1 (229 aa).

It belongs to the universal ribosomal protein uL1 family. Part of the 50S ribosomal subunit.

In terms of biological role, binds directly to 23S rRNA. The L1 stalk is quite mobile in the ribosome, and is involved in E site tRNA release. Functionally, protein L1 is also a translational repressor protein, it controls the translation of the L11 operon by binding to its mRNA. The sequence is that of Large ribosomal subunit protein uL1 from Streptococcus equi subsp. zooepidemicus (strain MGCS10565).